The sequence spans 149 residues: Probable flagellum biosynthesis repressor protein FlbT (149 aa).

Belongs to the FlbT family.

Has a post-transcriptional repressor function in flagellum biogenesis. Associates with the 5'-UTR of fljK mRNA and promotes its degradation. The chain is Probable flagellum biosynthesis repressor protein FlbT from Sinorhizobium medicae (strain WSM419) (Ensifer medicae).